Consider the following 623-residue polypeptide: Chaperone protein DnaK (623 aa).

Threonine 197 is subject to Phosphothreonine; by autocatalysis. The span at 595–615 (AENMYKKDEPNTANDKKKKDD) shows a compositional bias: basic and acidic residues. A disordered region spans residues 595-623 (AENMYKKDEPNTANDKKKKDDDVIDAEVE).

It belongs to the heat shock protein 70 family.

In terms of biological role, acts as a chaperone. The sequence is that of Chaperone protein DnaK from Campylobacter jejuni subsp. doylei (strain ATCC BAA-1458 / RM4099 / 269.97).